We begin with the raw amino-acid sequence, 911 residues long: DNA mismatch repair protein MutS (911 aa).

Residues Met-1–Asp-10 show a composition bias toward basic and acidic residues. Residues Met-1–Glu-24 form a disordered region. Gly-662–Ser-669 provides a ligand contact to ATP.

Belongs to the DNA mismatch repair MutS family.

In terms of biological role, this protein is involved in the repair of mismatches in DNA. It is possible that it carries out the mismatch recognition step. This protein has a weak ATPase activity. This chain is DNA mismatch repair protein MutS, found in Bartonella quintana (strain Toulouse) (Rochalimaea quintana).